We begin with the raw amino-acid sequence, 606 residues long: MARSADRSAEDGDSRAGIRELSLEEVLKSYEQPINEEQAWAVCFQCCGDLRAPRPQPHPRRPELQIRDPASIILHRDGRVTALLQSCDDSNAGCESAADGKLVQSLGVAIYRALDWGLDDSEERELSPQLEQLIEFMVGGPDCGQSKHCGSNAAKDEGYSGQDEEEEEEEEEEEEGAGRGIHTVQQVMTMCASRLANPVLAPEHYQAVCRALFLETLELQTFLSRIRDAKEMLKKIRKEEPQEDSAAELDALQHTDWARLWVQLMKELRQGVKLKKVEEQPFNPLPTEFSLTPFEMLMQDIRLRKYKLRKVVVDGNIPTCVKRNAHELILDFIRSRPPLKPVSERSLPPPPQRPQSLHDRVLAEIRQDHKLRPVELPSSKRSFGSLPCLAHTCQCDIKSTSCIDLSVTGAGSRPSSRIRVLLKAPTLAEMEEMNIFEDEDSPDGVDMRRVESSPTPLKRDRSFSEHDLDELRGEMMSDSPQHSGVAALRAERPRSHTLTGVYQASFPGFERRSASTCRSLSSDDRSSDPGGDSASHGLSRHQWMEEFCHPVETLALTVDGVINVRRILVKAEMEKYMQNKELFSNLKKGKVCVSLSYMIDISPTAQ.

Residues 21 to 219 (LSLEEVLKSY…RALFLETLEL (199 aa)) enclose the KIND domain. Residues 147-181 (KHCGSNAAKDEGYSGQDEEEEEEEEEEEEGAGRGI) form a disordered region. The segment covering 162 to 175 (QDEEEEEEEEEEEE) has biased composition (acidic residues). WH2 domains are found at residues 263-277 (QLMKELRQGVKLKKV) and 357-374 (LHDRVLAEIRQDHKLRPV). 2 disordered regions span residues 438 to 464 (DEDSPDGVDMRRVESSPTPLKRDRSFS) and 517 to 537 (CRSLSSDDRSSDPGGDSASHG). Basic and acidic residues predominate over residues 445 to 464 (VDMRRVESSPTPLKRDRSFS). The spir-box stretch occupies residues 554–574 (LALTVDGVINVRRILVKAEME).

The protein belongs to the spire family.

The protein resides in the cytoplasm. Its subcellular location is the cytoskeleton. It is found in the cytosol. The protein localises to the cell membrane. It localises to the cytoplasmic vesicle membrane. In terms of biological role, acts as an actin nucleation factor, remains associated with the slow-growing pointed end of the new filament. Involved in intracellular vesicle transport along actin fibers, providing a novel link between actin cytoskeleton dynamics and intracellular transport. Required for asymmetric spindle positioning and asymmetric cell division during oocyte meiosis. Required for normal formation of the cleavage furrow and for polar body extrusion during female germ cell meiosis. Also acts in the nucleus: together with SPIRE1 and SPIRE2, promotes assembly of nuclear actin filaments in response to DNA damage in order to facilitate movement of chromatin and repair factors after DNA damage. This Danio rerio (Zebrafish) protein is Protein spire homolog 2 (spire2).